A 24-amino-acid chain; its full sequence is Frenatin-4 (24 aa).

In terms of tissue distribution, expressed by the skin glands.

It localises to the secreted. Very weak antimicrobial peptide since it does not show activity below 100 ug/ml against Bacillus cereus, Escherichia coli, Leuconostoc mesenteroides, Micrococcus luteus, Pastewella haemolytica, Staphylococcus aureus, Streptococcus faecalis and Streptococcus uberis. This Nyctimystes infrafrenatus (White-lipped tree frog) protein is Frenatin-4.